The sequence spans 520 residues: 5'-nucleotidase domain-containing protein 2 (520 aa).

The Nucleophile role is filled by Asp73. Positions 73, 75, and 358 each coordinate Mg(2+). The active-site Proton donor is the Asp75.

It belongs to the 5'(3')-deoxyribonucleotidase family. Interacts with tyrosine 3-monooxygenase TH; the interaction results in reduced phosphorylation and decreased catalytic activity of TH.

The protein resides in the cytoplasm. Promotes dephosphorylation of tyrosine 3-monooxygenase TH which decreases TH catalytic activity and leads to reduced synthesis of catecholamines including dopamine, noradrenaline and adrenaline. The exact mechanism of activity is unknown but may act as a phosphatase or promote the activity of phosphatases or may inhibit phosphorylation by acting as a barrier to interfere with protein kinase access. The chain is 5'-nucleotidase domain-containing protein 2 (NT5DC2) from Homo sapiens (Human).